We begin with the raw amino-acid sequence, 327 residues long: Phosphate acyltransferase (327 aa).

This sequence belongs to the PlsX family. As to quaternary structure, homodimer. Probably interacts with PlsY.

It is found in the cytoplasm. The catalysed reaction is a fatty acyl-[ACP] + phosphate = an acyl phosphate + holo-[ACP]. It participates in lipid metabolism; phospholipid metabolism. In terms of biological role, catalyzes the reversible formation of acyl-phosphate (acyl-PO(4)) from acyl-[acyl-carrier-protein] (acyl-ACP). This enzyme utilizes acyl-ACP as fatty acyl donor, but not acyl-CoA. The chain is Phosphate acyltransferase from Mycoplasma mobile (strain ATCC 43663 / 163K / NCTC 11711) (Mesomycoplasma mobile).